The sequence spans 240 residues: Small ribosomal subunit protein uS3 (240 aa).

Positions 39–109 (IRQYIEKTLN…QIRVNVIEVP (71 aa)) constitute a KH type-2 domain. The tract at residues 219–240 (APPSQPRRKSRRQQFDDRSQDG) is disordered. Basic and acidic residues predominate over residues 231–240 (QQFDDRSQDG).

This sequence belongs to the universal ribosomal protein uS3 family. In terms of assembly, part of the 30S ribosomal subunit. Forms a tight complex with proteins S10 and S14.

Functionally, binds the lower part of the 30S subunit head. Binds mRNA in the 70S ribosome, positioning it for translation. In Synechocystis sp. (strain ATCC 27184 / PCC 6803 / Kazusa), this protein is Small ribosomal subunit protein uS3.